The following is a 757-amino-acid chain: E3 ubiquitin-protein ligase SMURF1 (757 aa).

The region spanning 1-120 is the C2 domain; the sequence is MSNPGTRRNG…TGYQRLDLCK (120 aa). Residues 193-237 form a disordered region; that stretch reads GNCRFVESPSQDQRLQAQRLRNPDVRGSLQTPQNRPHGHQSPELP. Ser200 bears the Phosphoserine mark. WW domains are found at residues 234–267 and 306–339; these read PELP…DPRI and GPLP…DPRL. Residues Lys381 and Lys383 each participate in a glycyl lysine isopeptide (Lys-Gly) (interchain with G-Cter in ubiquitin) cross-link. Residues 420 to 757 enclose the HECT domain; sequence RPKDLKKRLM…VEETCGFAVE (338 aa). Residue Cys725 is the Glycyl thioester intermediate of the active site.

Interacts with TRAF4. Interacts (via HECT domain) with FBXL15 (via LRR repeats). Interacts with SMAD7 and TGFBR1; SMAD7 recruits SMURF1 to TGFBR1 and regulates TGF-beta receptor degradation. Interacts with MAVS; the interaction is mediated by NDFIP1. In terms of processing, auto-ubiquitinated in presence of NDFIP1. Ubiquitinated by the SCF(FBXL15) complex at Lys-381 and Lys-383, leading to its degradation by the proteasome. Lys-383 is the primary ubiquitination site. As to expression, expressed in melanocytes.

Its subcellular location is the cytoplasm. The protein resides in the cell membrane. It catalyses the reaction S-ubiquitinyl-[E2 ubiquitin-conjugating enzyme]-L-cysteine + [acceptor protein]-L-lysine = [E2 ubiquitin-conjugating enzyme]-L-cysteine + N(6)-ubiquitinyl-[acceptor protein]-L-lysine.. The protein operates within protein modification; protein ubiquitination. Functionally, E3 ubiquitin-protein ligase that acts as a negative regulator of BMP signaling pathway. Mediates ubiquitination and degradation of SMAD1 and SMAD5, 2 receptor-regulated SMADs specific for the BMP pathway. Promotes ubiquitination and subsequent proteasomal degradation of TRAF family members and RHOA. Promotes ubiquitination and subsequent proteasomal degradation of MAVS. Acts as an antagonist of TGF-beta signaling by ubiquitinating TGFBR1 and targeting it for degradation. Plays a role in dendrite formation by melanocytes. This is E3 ubiquitin-protein ligase SMURF1 (SMURF1) from Homo sapiens (Human).